We begin with the raw amino-acid sequence, 304 residues long: MMMADIATAFPAIKILRDEPLAHYTHTKTGGPADYLAFPTNVQETKSLLAYANQISLPVTVVGNASNLIVRDGGIRGLVMILTQMAAITTAGNTVTAEAGAALITTTQVAQAHALSGLEFAAGIPGSVGGAIFMNAGAYGGEISTVAVAAEVLTPEGEIRTLNQAELDFGYRHSSIQDYHDIVLTATFALTPGDGAAIQAQMDDLNARRAAKQPLELPSCGSVFKRPVGHYTGQLIQEAGLQGLKWGGAQVSTKHAGFIVNIDHATATDYLELIHHIQAVILEKDGVTLETEVRIIGEEPTTQK.

An FAD-binding PCMH-type domain is found at 28-193; the sequence is KTGGPADYLA…LTATFALTPG (166 aa). Arg172 is an active-site residue. Ser222 functions as the Proton donor in the catalytic mechanism. Glu292 is an active-site residue.

Belongs to the MurB family. Requires FAD as cofactor.

The protein localises to the cytoplasm. The enzyme catalyses UDP-N-acetyl-alpha-D-muramate + NADP(+) = UDP-N-acetyl-3-O-(1-carboxyvinyl)-alpha-D-glucosamine + NADPH + H(+). Its pathway is cell wall biogenesis; peptidoglycan biosynthesis. Functionally, cell wall formation. This Levilactobacillus brevis (strain ATCC 367 / BCRC 12310 / CIP 105137 / JCM 1170 / LMG 11437 / NCIMB 947 / NCTC 947) (Lactobacillus brevis) protein is UDP-N-acetylenolpyruvoylglucosamine reductase.